The primary structure comprises 197 residues: HTH-type transcriptional regulator BetI (197 aa).

An HTH tetR-type domain is found at 8 to 68 (PIRRQQLIQA…ATMRHLMNAL (61 aa)). Residues 31–50 (SIALIARLAGVSNGIISHYF) constitute a DNA-binding region (H-T-H motif).

It participates in amine and polyamine biosynthesis; betaine biosynthesis via choline pathway [regulation]. Its function is as follows. Repressor involved in the biosynthesis of the osmoprotectant glycine betaine. It represses transcription of the choline transporter BetT and the genes of BetAB involved in the synthesis of glycine betaine. This Pseudomonas syringae pv. tomato (strain ATCC BAA-871 / DC3000) protein is HTH-type transcriptional regulator BetI.